The sequence spans 286 residues: Bifunctional protein FolD (286 aa).

Residues 165–167, S190, and V231 each bind NADP(+); that span reads GRS.

This sequence belongs to the tetrahydrofolate dehydrogenase/cyclohydrolase family. Homodimer.

It carries out the reaction (6R)-5,10-methylene-5,6,7,8-tetrahydrofolate + NADP(+) = (6R)-5,10-methenyltetrahydrofolate + NADPH. It catalyses the reaction (6R)-5,10-methenyltetrahydrofolate + H2O = (6R)-10-formyltetrahydrofolate + H(+). Its pathway is one-carbon metabolism; tetrahydrofolate interconversion. Catalyzes the oxidation of 5,10-methylenetetrahydrofolate to 5,10-methenyltetrahydrofolate and then the hydrolysis of 5,10-methenyltetrahydrofolate to 10-formyltetrahydrofolate. The protein is Bifunctional protein FolD of Bacillus mycoides (strain KBAB4) (Bacillus weihenstephanensis).